We begin with the raw amino-acid sequence, 573 residues long: Methionine--tRNA ligase (573 aa).

The 'HIGH' region motif lies at 10 to 20; sequence PYVNSVPHLGN. Zn(2+)-binding residues include cysteine 143, cysteine 146, cysteine 156, and cysteine 159. The 'KMSKS' region signature appears at 333 to 337; it reads KFSKS. Lysine 336 lines the ATP pocket.

The protein belongs to the class-I aminoacyl-tRNA synthetase family. MetG type 1 subfamily. The cofactor is Zn(2+).

The protein resides in the cytoplasm. The catalysed reaction is tRNA(Met) + L-methionine + ATP = L-methionyl-tRNA(Met) + AMP + diphosphate. In terms of biological role, is required not only for elongation of protein synthesis but also for the initiation of all mRNA translation through initiator tRNA(fMet) aminoacylation. In Saccharolobus solfataricus (strain ATCC 35092 / DSM 1617 / JCM 11322 / P2) (Sulfolobus solfataricus), this protein is Methionine--tRNA ligase.